The primary structure comprises 339 residues: Aspartate carbamoyltransferase catalytic subunit (339 aa).

Carbamoyl phosphate-binding residues include Arg-59 and Thr-60. Lys-87 serves as a coordination point for L-aspartate. Carbamoyl phosphate-binding residues include Arg-109, His-142, and Gln-145. Positions 182 and 253 each coordinate L-aspartate. Carbamoyl phosphate contacts are provided by Gly-294 and Pro-295.

It belongs to the aspartate/ornithine carbamoyltransferase superfamily. ATCase family. As to quaternary structure, heterododecamer (2C3:3R2) of six catalytic PyrB chains organized as two trimers (C3), and six regulatory PyrI chains organized as three dimers (R2).

It catalyses the reaction carbamoyl phosphate + L-aspartate = N-carbamoyl-L-aspartate + phosphate + H(+). It participates in pyrimidine metabolism; UMP biosynthesis via de novo pathway; (S)-dihydroorotate from bicarbonate: step 2/3. Catalyzes the condensation of carbamoyl phosphate and aspartate to form carbamoyl aspartate and inorganic phosphate, the committed step in the de novo pyrimidine nucleotide biosynthesis pathway. The polypeptide is Aspartate carbamoyltransferase catalytic subunit (Prochlorococcus marinus (strain NATL1A)).